The sequence spans 491 residues: Eupatolide synthase (491 aa).

The helical; Signal-anchor for type II membrane protein transmembrane segment at 7 to 27 (LPSWLLPAVVILTISCILMLW) threads the bilayer. Cysteine 430 is a binding site for heme.

It belongs to the cytochrome P450 family. Heme is required as a cofactor. Expressed in leaf primordia.

It is found in the membrane. The enzyme catalyses 8beta-hydroxygermacra-1(10),4,11(13)-trien-12-oate + reduced [NADPH--hemoprotein reductase] + O2 = eupatolide + oxidized [NADPH--hemoprotein reductase] + 2 H2O. It functions in the pathway secondary metabolite biosynthesis; terpenoid biosynthesis. Its function is as follows. Involved in the biosynthesis of germacrene-derived sesquiterpene lactones. Hydroxylates 8-beta-hydroxy-germacrene A acid to 6-alpha,8-beta-hydroxy-germacrene A acid, which, in turn, undergo spontaneous lactonization to become eupatolide. In Helianthus annuus (Common sunflower), this protein is Eupatolide synthase.